A 301-amino-acid polypeptide reads, in one-letter code: Acetylglutamate kinase (301 aa).

Substrate is bound by residues 68–69, arginine 90, and asparagine 195; that span reads GG.

It belongs to the acetylglutamate kinase family. ArgB subfamily.

It localises to the cytoplasm. The enzyme catalyses N-acetyl-L-glutamate + ATP = N-acetyl-L-glutamyl 5-phosphate + ADP. The protein operates within amino-acid biosynthesis; L-arginine biosynthesis; N(2)-acetyl-L-ornithine from L-glutamate: step 2/4. Its function is as follows. Catalyzes the ATP-dependent phosphorylation of N-acetyl-L-glutamate. This is Acetylglutamate kinase from Pseudomonas aeruginosa (strain LESB58).